The chain runs to 214 residues: Cytochrome b (214 aa).

The next 4 helical transmembrane spans lie at 31–51 (FGSM…FLAI), 75–96 (WIMQ…YIHI), 111–131 (WLSG…GYVL), and 176–196 (FFAL…IHII). Positions 81 and 95 each coordinate heme b. 2 residues coordinate heme b: histidine 180 and histidine 194. A ubiquinone is bound at residue histidine 199.

It belongs to the cytochrome b family. As to quaternary structure, the cytochrome bc1 complex contains 3 respiratory subunits (MT-CYB, CYC1 and UQCRFS1), 2 core proteins (UQCRC1 and UQCRC2) and probably 6 low-molecular weight proteins. Heme b is required as a cofactor.

The protein localises to the mitochondrion inner membrane. Functionally, component of the ubiquinol-cytochrome c reductase complex (complex III or cytochrome b-c1 complex) that is part of the mitochondrial respiratory chain. The b-c1 complex mediates electron transfer from ubiquinol to cytochrome c. Contributes to the generation of a proton gradient across the mitochondrial membrane that is then used for ATP synthesis. The sequence is that of Cytochrome b (MT-CYB) from Atractaspis micropholis (Mole viper).